Here is a 540-residue protein sequence, read N- to C-terminus: Malolactic enzyme (540 aa).

The active-site Proton donor is Y90. Residue K163 is the Proton acceptor of the active site. K163 provides a ligand contact to substrate. Mn(2+) is bound by residues E234, D235, and D258. NAD(+) is bound by residues 291-294 (GGSA), N403, and N448. N448 contacts substrate.

It belongs to the malic enzymes family. Homodimer. Requires Mn(2+) as cofactor. NAD(+) is required as a cofactor.

The catalysed reaction is (S)-malate + H(+) = (S)-lactate + CO2. In terms of biological role, involved in the malolactic fermentation (MLF) of wine, which results in a natural decrease in acidity and favorable changes in wine flavors. Catalyzes the decarboxylation of L-malate to L-lactate. This Lactococcus lactis subsp. lactis (strain IL1403) (Streptococcus lactis) protein is Malolactic enzyme.